The following is a 555-amino-acid chain: Urocanate hydratase (555 aa).

Residues 51 to 52, Gln129, 175 to 177, Glu195, 241 to 242, 262 to 266, 272 to 273, and Tyr321 contribute to the NAD(+) site; these read GG, GMG, NA, QTSAH, and YL. Cys409 is an active-site residue. NAD(+) is bound at residue Gly491.

Belongs to the urocanase family. The cofactor is NAD(+).

Its subcellular location is the cytoplasm. It catalyses the reaction 4-imidazolone-5-propanoate = trans-urocanate + H2O. It functions in the pathway amino-acid degradation; L-histidine degradation into L-glutamate; N-formimidoyl-L-glutamate from L-histidine: step 2/3. Its function is as follows. Catalyzes the conversion of urocanate to 4-imidazolone-5-propionate. The sequence is that of Urocanate hydratase from Hyphomonas neptunium (strain ATCC 15444).